We begin with the raw amino-acid sequence, 210 residues long: MRKRQQSQNEGTSAVSQAPGNQRPNNTCCFCWCCCCSCSCLTVRNEDRGDNAGRPTHTTKMESIQVIEECQNPTADEILSWAQNFDKMMKTPAGRNLFREFLRTEYSEENLLFWLACEDLKKEQNKKVIEEKARLIYEDYISILSPKEVSLDSRVREVINRNLLDPSPHMYEDAQLQIYTLMHRDSFPRFLNSQIYKSLVESITGSTSET.

Positions 1 to 21 (MRKRQQSQNEGTSAVSQAPGN) are disordered. One can recognise an RGS domain in the interval 84–200 (NFDKMMKTPA…LNSQIYKSLV (117 aa)).

As to quaternary structure, interacts with GNAI1 and GNAQ. Interacts with GNAZ and GNAI2. Forms a complex with mu-opioid receptors and G(alpha)z/i2 subunits, including GNAZ and GNAI2; the formation of this complex results in mu-opioid receptor desensitization. Post-translationally, N- and O-glycosylated in synapsomal membranes. In terms of processing, serine phosphorylated in synapsomal membranes. Sumoylated with SUMO1 and SUM02 in synaptosomes. The sumoylated forms act as a scaffold for sequestering mu-opioid receptor-activated G(alpha) subunits.

It localises to the membrane. The protein resides in the synapse. The protein localises to the synaptosome. Its subcellular location is the nucleus. It is found in the cytoplasm. Its function is as follows. Regulates G protein-coupled receptor signaling cascades, including signaling via muscarinic acetylcholine receptor CHRM2 and dopamine receptor DRD2. Inhibits signal transduction by increasing the GTPase activity of G protein alpha subunits, thereby driving them into their inactive GDP-bound form. Binds selectively to GNAZ and GNAI2 subunits, accelerates their GTPase activity and regulates their signaling activities. Negatively regulates mu-opioid receptor-mediated activation of the G-proteins. The sequence is that of Regulator of G-protein signaling 17 (RGS17) from Gallus gallus (Chicken).